A 427-amino-acid chain; its full sequence is MALRITRNTKISAENKAKISMAGAKRVPVAAVATSKPGLRPRTALGDIGNKVSEQPQAKLPLKKEAKTLASGKVTAKKVPKPLEKAPVPVPEPQPEPEPEPEHVKEDKLSPEPILVDTPSPSPMETSGCAPAEEYLCQAFSDVILAVSDVDAEDGADPNLCSEYVKDIYAYLRQLEEEQAVKPKYLMGREVTGNMRAILIDWLVQVQIKFRLLQETMYMTVSIIDRFMQDTYVPKKMLQLVGVTAMFVASKYEEMYPPEIGDFAFVTDNTYTKFQIRQMEMKILRALNFSLGRPLPLHFLRRASKIGEVDVELHTLAKYLMELTMLDYDMVHFPPSQIAAGAFCLALKVLDNGEWTPTLQHYLSYTEESLLVVMQHLAKNVVMVNRGLTKHMTIKNKYATSKHAKISTLAQLNSALVQDLAKAVAKV.

The tract at residues 33–126 (ATSKPGLRPR…DTPSPSPMET (94 aa)) is disordered. At Lys-73 the chain carries N6-acetyllysine. Residues 100 to 110 (EPEHVKEDKLS) are compositionally biased toward basic and acidic residues. Phosphoserine; by CDK1 is present on Ser-120. The residue at position 122 (Ser-122) is a Phosphoserine. Phosphoserine; by PLK1 is present on Ser-127. The residue at position 141 (Ser-141) is a Phosphoserine. 2 interaction with CDK2 regions span residues 163–171 (EYVKDIYAY) and 252–255 (YEEM). Thr-315 is subject to Phosphothreonine.

Belongs to the cyclin family. Cyclin AB subfamily. As to quaternary structure, interacts with the CDC2 protein kinase to form a serine/threonine kinase holoenzyme complex also known as maturation promoting factor (MPF). The cyclin subunit imparts substrate specificity to the complex. Binds HEI10. Interacts with catalytically active RALBP1 and CDC2 during mitosis to form an endocytotic complex during interphase. Interacts with CCNF; interaction is required for nuclear localization. Interacts with CDK5RAP3. Interacts with RFPL4A and UBE2A. Interacts with INCA1. In terms of processing, ubiquitinated by the SCF(NIPA) complex during interphase, leading to its destruction. Deubiquitinated by USP22 during G2/M phase. Phosphorylated by PLK1 at Ser-127 on centrosomes during prophase: phosphorylation by PLK1 does not cause nuclear import. Phosphorylation at Ser-141 was also reported to be mediated by PLK1 but Ser-127 seems to be the primary phosphorylation site.

The protein localises to the cytoplasm. The protein resides in the nucleus. It localises to the cytoskeleton. It is found in the microtubule organizing center. Its subcellular location is the centrosome. Functionally, essential for the control of the cell cycle at the G2/M (mitosis) transition. This chain is G2/mitotic-specific cyclin-B1 (CCNB1), found in Bos taurus (Bovine).